Reading from the N-terminus, the 183-residue chain is MDSEFFQPVYPRHYGECLSPVTPPSFFSTHMYTILIAIVVLVIIIIVLIYLFSSRKKKAAAAIEEEDIQFINPYQDQQWAEVTPQPGTSKPAGATTASAGKPVTGRPATNRPATNKPVTDNPVTDRLVMATGGPAAAPAAASAHPTEPYTTVTTQNTASQTMSAIENLRQRNTYTHKDLENSL.

The chain crosses the membrane as a helical span at residues 32–52; sequence YTILIAIVVLVIIIIVLIYLF. The interval 81 to 157 is disordered; that stretch reads EVTPQPGTSK…PYTTVTTQNT (77 aa). The span at 111–122 shows a compositional bias: polar residues; it reads RPATNKPVTDNP. A compositionally biased stretch (low complexity) spans 130–143; sequence ATGGPAAAPAAASA. Residues 149 to 161 form an interaction with host DYNLL1 region; that stretch reads YTTVTTQNTASQT.

Belongs to the asfivirus envelope protein p54 family. Interacts with the host light chain cytoplasmic dynein DYNLL1; this interaction is critical for intracellular microtubule-dependent virus transport toward viral factories.

The protein localises to the virion membrane. The protein resides in the host cytoplasm. It localises to the host cytoskeleton. Its subcellular location is the host endoplasmic reticulum membrane. In terms of biological role, inner envelope protein involved, through its interaction with host dynein, in the intracellular microtubule-dependent transport of viral capsid toward viral factories. Seems to induce caspase-3 activation and apoptosis. Plays a role in virion morphogenesis by recruiting and transforming the host ER membranes into the precursors of the viral envelope. Involved in virus attachment to the host cell. In African swine fever virus (strain Badajoz 1971 Vero-adapted) (Ba71V), this protein is Inner membrane protein p54.